A 1576-amino-acid chain; its full sequence is ABC transporter ALT5 (1576 aa).

The next 10 membrane-spanning stretches (helical) occupy residues 27–47 (LKFE…ILAV), 72–92 (ILGF…TQGT), 99–119 (GLFL…VIVC), 267–287 (LPLS…PILP), 289–309 (LVLI…TGFL), 321–341 (GLIG…SLYW), 387–407 (VLAG…AVIV), 417–437 (GFFA…ATVG), 500–520 (ITAM…TLAA), and 525–545 (VATS…APLG). Residues 289 to 556 (LVLIGLSISQ…LFQSVAPLMS (268 aa)) form the ABC transmembrane type-1 1 domain. An ABC transporter 1 domain is found at 602-834 (FRVVNGSFRW…NGGYLQSLCV (233 aa)). Position 636-643 (636-643 (GPVGSGKS)) interacts with ATP. 7 consecutive transmembrane segments (helical) span residues 915–935 (VVAL…FAFP), 957–977 (FWVG…FLTM), 981–1001 (VTSI…AAIM), 1035–1054 (LIQF…VLAA), 1060–1078 (AAMY…KLYL), 1142–1162 (WLLF…VTLV), and 1171–1191 (GFAG…ASAM). The 281-residue stretch at 919–1199 (VAFLASAICY…AMQSYAKLET (281 aa)) folds into the ABC transmembrane type-1 2 domain. One can recognise an ABC transporter 2 domain in the interval 1236 to 1567 (IKLDGVSASY…SHSKFRALCE (332 aa)). Residue 1278–1285 (GRSGSGKS) participates in ATP binding.

This sequence belongs to the ABC transporter superfamily. ABCC family. Conjugate transporter (TC 3.A.1.208) subfamily.

It is found in the cell membrane. In terms of biological role, ABC transporter that may provide the dual role AAL-toxin export and self-protection by allowing the fungus to evade the harmful effect of its own AAL-toxin production. The protein is ABC transporter ALT5 of Alternaria alternata (Alternaria rot fungus).